A 574-amino-acid polypeptide reads, in one-letter code: Amino-acid acetyltransferase, mitochondrial (574 aa).

The transit peptide at 1–13 (MWRRIFAHELKYD) directs the protein to the mitochondrion. Residues 392–560 (KGAKPSSNSP…KRLREFMRSV (169 aa)) enclose the N-acetyltransferase domain.

It belongs to the acetyltransferase family. Interacts with the acetylglutamate kinase chain of AGR5,6.

It localises to the mitochondrion. It catalyses the reaction L-glutamate + acetyl-CoA = N-acetyl-L-glutamate + CoA + H(+). It functions in the pathway amino-acid biosynthesis; L-arginine biosynthesis; N(2)-acetyl-L-ornithine from L-glutamate: step 1/4. Its activity is regulated as follows. Feedback inhibition by L-arginine. Its function is as follows. N-acetylglutamate synthase involved in arginine biosynthesis. This chain is Amino-acid acetyltransferase, mitochondrial (ARG2), found in Saccharomyces cerevisiae (strain RM11-1a) (Baker's yeast).